The primary structure comprises 297 residues: Ribosomal RNA small subunit methyltransferase H (297 aa).

Residues 30–32 (GGY), D48, F75, D96, and Q103 each bind S-adenosyl-L-methionine.

It belongs to the methyltransferase superfamily. RsmH family.

Its subcellular location is the cytoplasm. It carries out the reaction cytidine(1402) in 16S rRNA + S-adenosyl-L-methionine = N(4)-methylcytidine(1402) in 16S rRNA + S-adenosyl-L-homocysteine + H(+). Functionally, specifically methylates the N4 position of cytidine in position 1402 (C1402) of 16S rRNA. This is Ribosomal RNA small subunit methyltransferase H from Ehrlichia canis (strain Jake).